The following is a 161-amino-acid chain: Phosphopantetheine adenylyltransferase (161 aa).

Ser10 provides a ligand contact to substrate. ATP-binding positions include 10 to 11 (SF) and His18. Positions 42, 74, and 88 each coordinate substrate. Residues 88–89 (RG), Glu99, and 124–130 (YSFLSSS) each bind ATP.

It belongs to the bacterial CoaD family. As to quaternary structure, homohexamer. Mg(2+) is required as a cofactor.

Its subcellular location is the cytoplasm. The enzyme catalyses (R)-4'-phosphopantetheine + ATP + H(+) = 3'-dephospho-CoA + diphosphate. The protein operates within cofactor biosynthesis; coenzyme A biosynthesis; CoA from (R)-pantothenate: step 4/5. In terms of biological role, reversibly transfers an adenylyl group from ATP to 4'-phosphopantetheine, yielding dephospho-CoA (dPCoA) and pyrophosphate. In Bacillus subtilis (strain 168), this protein is Phosphopantetheine adenylyltransferase.